A 145-amino-acid polypeptide reads, in one-letter code: NADH dehydrogenase [ubiquinone] 1 alpha subcomplex subunit 12 (145 aa).

Residue Met-1 is modified to N-acetylmethionine.

This sequence belongs to the complex I NDUFA12 subunit family. In terms of assembly, complex I is composed of 45 different subunits.

It is found in the mitochondrion inner membrane. Functionally, accessory subunit of the mitochondrial membrane respiratory chain NADH dehydrogenase (Complex I), that is believed not to be involved in catalysis. Complex I functions in the transfer of electrons from NADH to the respiratory chain. The immediate electron acceptor for the enzyme is believed to be ubiquinone. The chain is NADH dehydrogenase [ubiquinone] 1 alpha subcomplex subunit 12 (Ndufa12) from Mus musculus (Mouse).